A 723-amino-acid chain; its full sequence is Polyribonucleotide nucleotidyltransferase (723 aa).

Mg(2+) contacts are provided by Asp487 and Asp493. The KH domain maps to 554-613 (PKILIMHINPDKIREVIGPSGKQINKIIDETGVKIDIEQDGTIFISSVDEAANQKAKQII). One can recognise an S1 motif domain in the interval 623–691 (GQVYLGKVKR…KQGRVNLSRK (69 aa)). A disordered region spans residues 702–723 (GELPRESREKRGRRPERHRMKP). Over residues 711 to 723 (KRGRRPERHRMKP) the composition is skewed to basic residues.

This sequence belongs to the polyribonucleotide nucleotidyltransferase family. Mg(2+) is required as a cofactor.

It localises to the cytoplasm. It catalyses the reaction RNA(n+1) + phosphate = RNA(n) + a ribonucleoside 5'-diphosphate. In terms of biological role, involved in mRNA degradation. Catalyzes the phosphorolysis of single-stranded polyribonucleotides processively in the 3'- to 5'-direction. This chain is Polyribonucleotide nucleotidyltransferase, found in Geobacillus kaustophilus (strain HTA426).